The chain runs to 553 residues: Mannuronan C5-epimerase AlgE4 (553 aa).

PbH1 repeat units follow at residues 133 to 155, 157 to 179, 180 to 202, 204 to 226, 234 to 256, 257 to 279, 280 to 301, and 320 to 342; these read DRDV…DPHE, TINL…VADY, LVDS…NVVT, THDF…VVQR, PSNI…LLKM, TSDI…RVYG, AQDV…AVPE, and TLNT…GIQE. A disordered region spans residues 367–427; the sequence is YGPHSTVSGE…DILDGGAGRD (61 aa). 2 Hemolysin-type calcium-binding repeats span residues 403 to 420 and 421 to 438; these read QGGS…DDIL and DGGA…ADTF.

The protein belongs to the D-mannuronate C5-epimerase family. Requires Ca(2+) as cofactor.

The protein localises to the secreted. The enzyme catalyses [(1-&gt;4)-beta-D-mannuronosyl](n) = [alginate](n). The protein operates within glycan biosynthesis; alginate biosynthesis. Inhibited by zinc. Converts beta-D-mannuronic acid (M) to alpha-L-guluronic acid (G), but introduces almost exclusively MG blocks, producing a polymer with non-gel-forming capacity. The protein is Mannuronan C5-epimerase AlgE4 of Azotobacter vinelandii.